The primary structure comprises 375 residues: Phospho-N-acetylmuramoyl-pentapeptide-transferase (375 aa).

The next 10 helical transmembrane spans lie at 2–22 (IGLL…TPLF), 55–75 (AVII…LAVL), 82–102 (PTAS…VGFV), 120–140 (GKII…LNFP), 158–178 (IPWL…FVIW), 198–218 (GLAT…SLFQ), 237–257 (PMDL…FLWW), 264–284 (IFMG…FAIF), 289–309 (ILVA…IIQV), and 345–365 (WLLS…DWLI).

Belongs to the glycosyltransferase 4 family. MraY subfamily. Mg(2+) is required as a cofactor.

Its subcellular location is the cell membrane. The enzyme catalyses UDP-N-acetyl-alpha-D-muramoyl-L-alanyl-gamma-D-glutamyl-meso-2,6-diaminopimeloyl-D-alanyl-D-alanine + di-trans,octa-cis-undecaprenyl phosphate = di-trans,octa-cis-undecaprenyl diphospho-N-acetyl-alpha-D-muramoyl-L-alanyl-D-glutamyl-meso-2,6-diaminopimeloyl-D-alanyl-D-alanine + UMP. Its pathway is cell wall biogenesis; peptidoglycan biosynthesis. Functionally, catalyzes the initial step of the lipid cycle reactions in the biosynthesis of the cell wall peptidoglycan: transfers peptidoglycan precursor phospho-MurNAc-pentapeptide from UDP-MurNAc-pentapeptide onto the lipid carrier undecaprenyl phosphate, yielding undecaprenyl-pyrophosphoryl-MurNAc-pentapeptide, known as lipid I. The chain is Phospho-N-acetylmuramoyl-pentapeptide-transferase from Micrococcus luteus (strain ATCC 4698 / DSM 20030 / JCM 1464 / CCM 169 / CCUG 5858 / IAM 1056 / NBRC 3333 / NCIMB 9278 / NCTC 2665 / VKM Ac-2230) (Micrococcus lysodeikticus).